A 203-amino-acid polypeptide reads, in one-letter code: ATP-dependent Clp protease proteolytic subunit (203 aa).

Ser-100 serves as the catalytic Nucleophile. The active site involves His-125.

Belongs to the peptidase S14 family. As to quaternary structure, fourteen ClpP subunits assemble into 2 heptameric rings which stack back to back to give a disk-like structure with a central cavity, resembling the structure of eukaryotic proteasomes.

The protein localises to the cytoplasm. The enzyme catalyses Hydrolysis of proteins to small peptides in the presence of ATP and magnesium. alpha-casein is the usual test substrate. In the absence of ATP, only oligopeptides shorter than five residues are hydrolyzed (such as succinyl-Leu-Tyr-|-NHMec, and Leu-Tyr-Leu-|-Tyr-Trp, in which cleavage of the -Tyr-|-Leu- and -Tyr-|-Trp bonds also occurs).. Its function is as follows. Cleaves peptides in various proteins in a process that requires ATP hydrolysis. Has a chymotrypsin-like activity. Plays a major role in the degradation of misfolded proteins. The sequence is that of ATP-dependent Clp protease proteolytic subunit from Anaeromyxobacter dehalogenans (strain 2CP-1 / ATCC BAA-258).